The sequence spans 262 residues: MVLIRVLANLLILQLSYAQKSSELVIGGDECNINEHRSLALVYITSGFLCGGTLINKEWVLTAAHCDRGDILVLLGVHRLKDVQTGVSKDVQTRVAKEKFICPNRKKDDEKDKDIMLIRMDSPVNISTHIAPLSLPSNPPSVGSVCRIMGWGAITSPNVTLPGVPHCADINIFDYEVCRAAKPELPVTSRTLCAGILEGGKGSCDGDSGGPLICNGEIQGIVSWGGDICAQPREPEPYTKVFDYTEWIQSIIAGNTDATCPP.

Residues 1 to 18 (MVLIRVLANLLILQLSYA) form the signal peptide. Positions 19–24 (QKSSEL) are excised as a propeptide. The region spanning 25–253 (VIGGDECNIN…YTEWIQSIIA (229 aa)) is the Peptidase S1 domain. Disulfide bonds link C31/C167, C50/C66, C102/C260, C146/C214, C178/C193, and C204/C229. Active-site charge relay system residues include H65 and D114. Residues N125 and N158 are each glycosylated (N-linked (GlcNAc...) asparagine). The active-site Charge relay system is the S208.

This sequence belongs to the peptidase S1 family. Snake venom subfamily. In terms of assembly, monomer. Expressed by the venom gland.

It localises to the secreted. Its function is as follows. Snake venom serine protease that may act in the hemostasis system of the prey. The sequence is that of Snake venom serine protease from Crotalus durissus durissus (Central American rattlesnake).